A 122-amino-acid chain; its full sequence is Histone H2B type 2-K1 (122 aa).

Residues 1–30 (MSAEYGQRQQPGGRGGRSSGNKKSKKRCRR) form a disordered region. The span at 20–30 (GNKKSKKRCRR) shows a compositional bias: basic residues. K31 is subject to N6-(2-hydroxyisobutyryl)lysine; alternate. K31 is subject to N6-(beta-hydroxybutyryl)lysine; alternate. K31 carries the post-translational modification N6-crotonyllysine; alternate. N6-glutaryllysine; alternate is present on K31. K31 bears the N6-succinyllysine; alternate mark. Residue K31 forms a Glycyl lysine isopeptide (Lys-Gly) (interchain with G-Cter in ubiquitin); alternate linkage. S33 carries the post-translational modification Phosphoserine. N6-(2-hydroxyisobutyryl)lysine; alternate occurs at positions 40, 43, and 54. Residues K40 and K43 each carry the N6-glutaryllysine; alternate modification. K40 is modified (N6-lactoyllysine; alternate). K43 is modified (N6-methyllysine). K43 carries the post-translational modification N6-methyllysine; alternate. The residue at position 54 (K54) is an N6,N6-dimethyllysine. Residue K54 is modified to N6,N6-dimethyllysine; alternate. R76 carries the post-translational modification Dimethylated arginine. S81 bears the Phosphoserine mark. 2 positions are modified to omega-N-methylarginine: R83 and R89. K105 carries the post-translational modification N6-(2-hydroxyisobutyryl)lysine; alternate. K105 carries the post-translational modification N6-glutaryllysine; alternate. Residue K105 is modified to N6-lactoyllysine; alternate. Residue K105 is modified to N6-methyllysine. At K105 the chain carries N6-methyllysine; alternate. O-linked (GlcNAc) serine glycosylation occurs at S109. A Phosphothreonine modification is found at T112. Residues K113 and K117 each carry the N6-(2-hydroxyisobutyryl)lysine; alternate modification. N6-(beta-hydroxybutyryl)lysine; alternate is present on residues K113 and K117. 2 positions are modified to N6-glutaryllysine; alternate: K113 and K117. N6-succinyllysine; alternate is present on residues K113 and K117. Position 113 is an N6-lactoyllysine; alternate (K113). The residue at position 113 (K113) is an N6-malonyllysine; alternate. K113 carries the N6-methylated lysine; alternate modification. Residue K117 forms a Glycyl lysine isopeptide (Lys-Gly) (interchain with G-Cter in ubiquitin); alternate linkage.

It belongs to the histone H2B family. The nucleosome is a histone octamer containing two molecules each of H2A, H2B, H3 and H4 assembled in one H3-H4 heterotetramer and two H2A-H2B heterodimers. The octamer wraps approximately 147 bp of DNA.

Its subcellular location is the chromosome. The protein resides in the nucleus. Its function is as follows. Core component of nucleosome. Nucleosomes wrap and compact DNA into chromatin, limiting DNA accessibility to the cellular machineries which require DNA as a template. Histones thereby play a central role in transcription regulation, DNA repair, DNA replication and chromosomal stability. DNA accessibility is regulated via a complex set of post-translational modifications of histones, also called histone code, and nucleosome remodeling. This Homo sapiens (Human) protein is Histone H2B type 2-K1.